A 602-amino-acid polypeptide reads, in one-letter code: Elongation factor 4 (602 aa).

Residues 5–187 (DHIRNFSIIA…ALVKRIPAPK (183 aa)) enclose the tr-type G domain. Residues 17 to 22 (DHGKST) and 134 to 137 (NKID) each bind GTP.

The protein belongs to the TRAFAC class translation factor GTPase superfamily. Classic translation factor GTPase family. LepA subfamily.

The protein localises to the cell inner membrane. The catalysed reaction is GTP + H2O = GDP + phosphate + H(+). Its function is as follows. Required for accurate and efficient protein synthesis under certain stress conditions. May act as a fidelity factor of the translation reaction, by catalyzing a one-codon backward translocation of tRNAs on improperly translocated ribosomes. Back-translocation proceeds from a post-translocation (POST) complex to a pre-translocation (PRE) complex, thus giving elongation factor G a second chance to translocate the tRNAs correctly. Binds to ribosomes in a GTP-dependent manner. This chain is Elongation factor 4, found in Zymomonas mobilis subsp. mobilis (strain ATCC 31821 / ZM4 / CP4).